The chain runs to 462 residues: Probable threonine/serine transporter YbxG (462 aa).

The next 12 helical transmembrane spans lie at 17–37 (MIAL…STIS), 38–58 (WTGP…FFIM), 89–109 (ITAW…IIAV), 121–141 (PAWI…LISV), 154–174 (IKIV…FFGF), 190–210 (GGFF…VIAA), 238–258 (IIWR…TVYP), 276–296 (IGIT…AMSG), 331–351 (LYGT…NYIA), 355–375 (IFVY…FIIL), 398–418 (FAPF…VGMW), and 427–447 (LIVG…FGIG).

This sequence belongs to the amino acid-polyamine-organocation (APC) superfamily.

The protein resides in the cell membrane. Its function is as follows. Probable threonine transporter. Is also active as a minor serine permease. The sequence is that of Probable threonine/serine transporter YbxG (ybxG) from Bacillus subtilis (strain 168).